An 87-amino-acid chain; its full sequence is Small ribosomal subunit protein uS17 (87 aa).

This sequence belongs to the universal ribosomal protein uS17 family. In terms of assembly, part of the 30S ribosomal subunit.

Its function is as follows. One of the primary rRNA binding proteins, it binds specifically to the 5'-end of 16S ribosomal RNA. This chain is Small ribosomal subunit protein uS17, found in Neisseria meningitidis serogroup C (strain 053442).